The following is a 184-amino-acid chain: Ribosome-recycling factor (184 aa).

The protein belongs to the RRF family.

Its subcellular location is the cytoplasm. In terms of biological role, responsible for the release of ribosomes from messenger RNA at the termination of protein biosynthesis. May increase the efficiency of translation by recycling ribosomes from one round of translation to another. The polypeptide is Ribosome-recycling factor (Clostridium botulinum (strain ATCC 19397 / Type A)).